The following is a 215-amino-acid chain: Ras-related protein Rab-14 (215 aa).

Ala-2 carries the N-acetylalanine modification. Residues Gly-21, Val-22, Gly-23, Lys-24, Ser-25, Cys-26, Ala-38, Asp-39, Cys-40, His-42, and Thr-43 each coordinate GTP. Mg(2+) is bound at residue Ser-25. The Switch 1 signature appears at His-42 to Glu-47. Mg(2+) contacts are provided by Thr-43 and Asp-66. Positions Ala-68–Thr-77 match the Switch 2 motif. Gly-69, Asn-124, Lys-125, Asp-127, Ala-155, and Lys-156 together coordinate GTP. The disordered stretch occupies residues Ser-188–Cys-215. Residues Cys-213 and Cys-215 are each lipidated (S-geranylgeranyl cysteine). At Cys-215 the chain carries Cysteine methyl ester.

It belongs to the small GTPase superfamily. Rab family. As to quaternary structure, interacts with ZFYVE20. Interacts with KIF16B. Interacts (GTP-bound form) with RUFY1; the interaction recruits RUFY1 onto endosomal membranes. Interacts (GTP-bound form) with RAB11FIP1 (via its C-terminus); the interactions doesn't mediate RAB11FIP1 rectruitment to membranes. Interacts with RAB11FIP2. It depends on Mg(2+) as a cofactor.

The protein localises to the recycling endosome. It is found in the early endosome membrane. It localises to the golgi apparatus membrane. Its subcellular location is the golgi apparatus. The protein resides in the trans-Golgi network membrane. The protein localises to the cytoplasmic vesicle. It is found in the phagosome. It catalyses the reaction GTP + H2O = GDP + phosphate + H(+). With respect to regulation, regulated by guanine nucleotide exchange factors (GEFs) including DENND6A and DENND6B which promote the exchange of bound GDP for free GTP. Regulated by GTPase activating proteins (GAPs) which increase the GTP hydrolysis activity. Inhibited by GDP dissociation inhibitors (GDIs) which prevent Rab-GDP dissociation. Functionally, the small GTPases Rab are key regulators of intracellular membrane trafficking, from the formation of transport vesicles to their fusion with membranes. Rabs cycle between an inactive GDP-bound form and an active GTP-bound form that is able to recruit to membranes different set of downstream effectors directly responsible for vesicle formation, movement, tethering and fusion. Involved in membrane trafficking between the Golgi complex and endosomes during early embryonic development. Regulates the Golgi to endosome transport of FGFR-containing vesicles during early development, a key process for developing basement membrane and epiblast and primitive endoderm lineages during early postimplantation development. May act by modulating the kinesin KIF16B-cargo association to endosomes. Regulates, together with its guanine nucleotide exchange factor DENND6A, the specific endocytic transport of ADAM10, N-cadherin/CDH2 shedding and cell-cell adhesion. Mediates endosomal tethering and fusion through the interaction with RUFY1 and RAB4B. Interaction with RAB11FIP1 may function in the process of neurite formation. The protein is Ras-related protein Rab-14 (RAB14) of Sus scrofa (Pig).